The following is a 79-amino-acid chain: Small ribosomal subunit protein bS21 (79 aa).

Composition is skewed to basic residues over residues 47–59 (RKQA…HLKK) and 69–79 (GVGHRRKKSTT). A disordered region spans residues 47-79 (RKQAAAVKRHLKKISRDVSSRRGVGHRRKKSTT).

It belongs to the bacterial ribosomal protein bS21 family.

This chain is Small ribosomal subunit protein bS21, found in Legionella pneumophila (strain Paris).